The primary structure comprises 260 residues: Carbonic anhydrase 2 (260 aa).

Position 2 is an N-acetylserine (Ser-2). Position 2 is a phosphoserine (Ser-2). The region spanning 3-259 (HHWGYGEHNG…LKNRQVRVFP (257 aa)) is the Alpha-carbonic anhydrase domain. The Proton donor/acceptor role is filled by His-64. Zn(2+) contacts are provided by His-94, His-96, and His-119. Phosphoserine is present on residues Ser-165 and Ser-172. 198 to 199 (TN) contributes to the substrate binding site.

This sequence belongs to the alpha-carbonic anhydrase family. In terms of assembly, interacts with SLC4A4 and SLC26A6. Interaction with SLC4A7 regulates SLC4A7 transporter activity. Requires Zn(2+) as cofactor.

The protein localises to the cytoplasm. It is found in the cell membrane. It catalyses the reaction hydrogencarbonate + H(+) = CO2 + H2O. The enzyme catalyses urea = cyanamide + H2O. Its activity is regulated as follows. Inhibited by acetazolamide. In terms of biological role, catalyzes the reversible hydration of carbon dioxide. Can also hydrate cyanamide to urea. Involved in the regulation of fluid secretion into the anterior chamber of the eye. Essential for bone resorption and osteoclast differentiation. Contributes to intracellular pH regulation in the duodenal upper villous epithelium during proton-coupled peptide absorption. Stimulates the chloride-bicarbonate exchange activity of SLC26A6. The chain is Carbonic anhydrase 2 (CA2) from Ovis aries (Sheep).